Here is a 64-residue protein sequence, read N- to C-terminus: MAILRSEEIREMDGEELQKKLDELKAEYARYISKSAAAGIHENPGKMREIRRTIARVLTIMNEK.

The protein belongs to the universal ribosomal protein uL29 family.

The protein is Large ribosomal subunit protein uL29 (rpl29) of Methanothermobacter thermautotrophicus (strain ATCC 29096 / DSM 1053 / JCM 10044 / NBRC 100330 / Delta H) (Methanobacterium thermoautotrophicum).